A 204-amino-acid chain; its full sequence is Urease accessory protein UreG (204 aa).

A GTP-binding site is contributed by 12-19 (GPVGSGKT).

The protein belongs to the SIMIBI class G3E GTPase family. UreG subfamily. In terms of assembly, homodimer. UreD, UreF and UreG form a complex that acts as a GTP-hydrolysis-dependent molecular chaperone, activating the urease apoprotein by helping to assemble the nickel containing metallocenter of UreC. The UreE protein probably delivers the nickel.

The protein resides in the cytoplasm. Facilitates the functional incorporation of the urease nickel metallocenter. This process requires GTP hydrolysis, probably effectuated by UreG. This Stutzerimonas stutzeri (strain A1501) (Pseudomonas stutzeri) protein is Urease accessory protein UreG.